A 416-amino-acid chain; its full sequence is Tyrosine--tRNA ligase (416 aa).

Positions 55-64 (PTGSEIHLGH) match the 'HIGH' region motif. The 'KMSKS' region signature appears at 249-253 (KMSKS). K252 is an ATP binding site. In terms of domain architecture, S4 RNA-binding spans 352-416 (TKAFHLLSSI…GKKTFRRISN (65 aa)).

Belongs to the class-I aminoacyl-tRNA synthetase family. TyrS type 2 subfamily. Homodimer.

Its subcellular location is the cytoplasm. The enzyme catalyses tRNA(Tyr) + L-tyrosine + ATP = L-tyrosyl-tRNA(Tyr) + AMP + diphosphate + H(+). In terms of biological role, catalyzes the attachment of tyrosine to tRNA(Tyr) in a two-step reaction: tyrosine is first activated by ATP to form Tyr-AMP and then transferred to the acceptor end of tRNA(Tyr). In Prochlorococcus marinus (strain SARG / CCMP1375 / SS120), this protein is Tyrosine--tRNA ligase.